The following is a 729-amino-acid chain: Fatty acid oxidation complex subunit alpha (729 aa).

The enoyl-CoA hydratase/isomerase stretch occupies residues 1-189 (MLYKGDTLYL…KIGLVDGVVK (189 aa)). Residue D296 coordinates substrate. Residues 311 to 729 (ETPKQAAVLG…ARPVGDLKTA (419 aa)) form a 3-hydroxyacyl-CoA dehydrogenase region. NAD(+)-binding positions include M324, D343, 400-402 (VVE), K407, and S429. Catalysis depends on H450, which acts as the For 3-hydroxyacyl-CoA dehydrogenase activity. NAD(+) is bound at residue N453. Substrate is bound by residues N500 and Y660. Residues 708–729 (RHNEPYYPPVEPARPVGDLKTA) form a disordered region.

The protein in the N-terminal section; belongs to the enoyl-CoA hydratase/isomerase family. In the C-terminal section; belongs to the 3-hydroxyacyl-CoA dehydrogenase family. Heterotetramer of two alpha chains (FadB) and two beta chains (FadA).

The enzyme catalyses a (3S)-3-hydroxyacyl-CoA + NAD(+) = a 3-oxoacyl-CoA + NADH + H(+). It carries out the reaction a (3S)-3-hydroxyacyl-CoA = a (2E)-enoyl-CoA + H2O. The catalysed reaction is a 4-saturated-(3S)-3-hydroxyacyl-CoA = a (3E)-enoyl-CoA + H2O. It catalyses the reaction (3S)-3-hydroxybutanoyl-CoA = (3R)-3-hydroxybutanoyl-CoA. The enzyme catalyses a (3Z)-enoyl-CoA = a 4-saturated (2E)-enoyl-CoA. It carries out the reaction a (3E)-enoyl-CoA = a 4-saturated (2E)-enoyl-CoA. The protein operates within lipid metabolism; fatty acid beta-oxidation. Functionally, involved in the aerobic and anaerobic degradation of long-chain fatty acids via beta-oxidation cycle. Catalyzes the formation of 3-oxoacyl-CoA from enoyl-CoA via L-3-hydroxyacyl-CoA. It can also use D-3-hydroxyacyl-CoA and cis-3-enoyl-CoA as substrate. This chain is Fatty acid oxidation complex subunit alpha, found in Shigella flexneri serotype 5b (strain 8401).